The chain runs to 510 residues: NEDD8-activating enzyme E1 regulatory subunit (510 aa).

Alanine 2 carries the post-translational modification N-acetylalanine. 2 positions are modified to N6-acetyllysine: lysine 6 and lysine 317. The interaction with UBA3 stretch occupies residues 307–320; the sequence is DMIADSGKYIKLQN.

This sequence belongs to the ubiquitin-activating E1 family. ULA1 subfamily. As to quaternary structure, heterodimer of UBA3 and NAE1. The complex binds NEDD8 and UBE2M. Binds APP and TP53BP2. In terms of processing, ubiquitinated by TRIP12, leading to its degradation by the proteasome.

It localises to the cell membrane. It functions in the pathway protein modification; protein neddylation. Its activity is regulated as follows. Binding of TP53BP2 to the regulatory subunit NAE1 decreases neddylation activity. In terms of biological role, regulatory subunit of the dimeric UBA3-NAE1 E1 enzyme. E1 activates NEDD8 by first adenylating its C-terminal glycine residue with ATP, thereafter linking this residue to the side chain of the catalytic cysteine, yielding a NEDD8-UBA3 thioester and free AMP. E1 finally transfers NEDD8 to the catalytic cysteine of UBE2M. Necessary for cell cycle progression through the S-M checkpoint. Overexpression of NAE1 causes apoptosis through deregulation of NEDD8 conjugation. The covalent attachment of NEDD8 to target proteins is known as 'neddylation' and the process is involved in the regulation of cell growth, viability and development. The sequence is that of NEDD8-activating enzyme E1 regulatory subunit (NAE1) from Macaca fascicularis (Crab-eating macaque).